We begin with the raw amino-acid sequence, 393 residues long: Nucleoside permease NupC (393 aa).

A run of 9 helical transmembrane segments spans residues 3–23 (YLIG…ASSG), 32–52 (IVVM…TGIG), 87–107 (TTFF…IGIL), 168–188 (LCAS…MTML), 191–211 (EYVV…ASII), 249–269 (VVVA…NGIF), 272–292 (VFGI…AFLV), 334–354 (AIVS…IIAG), and 372–392 (LKLL…VGLI).

It belongs to the concentrative nucleoside transporter (CNT) (TC 2.A.41) family.

The protein resides in the cell membrane. Functionally, transport of the pyrimidine nucleoside uridine. This Bacillus subtilis (strain 168) protein is Nucleoside permease NupC.